Reading from the N-terminus, the 219-residue chain is Ribosome maturation factor RimP (219 aa).

The tract at residues 195 to 219 (EGRIPGDDLGAEPEDVASTETQEKK) is disordered.

Belongs to the RimP family.

It is found in the cytoplasm. Its function is as follows. Required for maturation of 30S ribosomal subunits. In Brucella abortus (strain S19), this protein is Ribosome maturation factor RimP.